A 230-amino-acid polypeptide reads, in one-letter code: Large ribosomal subunit protein uL1 (230 aa).

This sequence belongs to the universal ribosomal protein uL1 family. As to quaternary structure, part of the 50S ribosomal subunit.

Binds directly to 23S rRNA. The L1 stalk is quite mobile in the ribosome, and is involved in E site tRNA release. Its function is as follows. Protein L1 is also a translational repressor protein, it controls the translation of the L11 operon by binding to its mRNA. The protein is Large ribosomal subunit protein uL1 of Lactobacillus johnsonii (strain CNCM I-12250 / La1 / NCC 533).